The following is a 105-amino-acid chain: Large ribosomal subunit protein uL24 (105 aa).

Belongs to the universal ribosomal protein uL24 family. In terms of assembly, part of the 50S ribosomal subunit.

One of two assembly initiator proteins, it binds directly to the 5'-end of the 23S rRNA, where it nucleates assembly of the 50S subunit. In terms of biological role, one of the proteins that surrounds the polypeptide exit tunnel on the outside of the subunit. This Mycolicibacterium smegmatis (strain ATCC 700084 / mc(2)155) (Mycobacterium smegmatis) protein is Large ribosomal subunit protein uL24.